Here is a 401-residue protein sequence, read N- to C-terminus: Membrane protein UL43 homolog (401 aa).

The next 10 helical transmembrane spans lie at 43–63 (FVGI…IDLL), 67–87 (STCL…RVPI), 93–113 (IVTV…SVWV), 124–144 (LIVV…ISLF), 159–179 (ASLL…LVEL), 182–202 (VPIG…FGLA), 259–279 (PGVI…WIVL), 294–314 (YVVF…QLVI), 332–352 (AVCM…SLAF), and 379–399 (ISRW…ATII).

Belongs to the alphaherpesvirinae HHV-1 UL43 family.

The protein resides in the membrane. This Equine herpesvirus 1 (strain Ab4p) (EHV-1) protein is Membrane protein UL43 homolog.